The sequence spans 272 residues: DNA repair protein RecO (272 aa).

This sequence belongs to the RecO family.

Its function is as follows. Involved in DNA repair and RecF pathway recombination. This chain is DNA repair protein RecO, found in Limosilactobacillus fermentum (strain NBRC 3956 / LMG 18251) (Lactobacillus fermentum).